The sequence spans 94 residues: Co-chaperonin GroES (94 aa).

Belongs to the GroES chaperonin family. In terms of assembly, heptamer of 7 subunits arranged in a ring. Interacts with the chaperonin GroEL.

The protein localises to the cytoplasm. In terms of biological role, together with the chaperonin GroEL, plays an essential role in assisting protein folding. The GroEL-GroES system forms a nano-cage that allows encapsulation of the non-native substrate proteins and provides a physical environment optimized to promote and accelerate protein folding. GroES binds to the apical surface of the GroEL ring, thereby capping the opening of the GroEL channel. This is Co-chaperonin GroES from Clostridium botulinum.